The primary structure comprises 105 residues: uncharacterized protein (105 aa).

2 consecutive transmembrane segments (helical) span residues 10–30 and 48–68; these read YVVFIISLIVLLIIFYVFKIG and YPLAISLVIWVIWYFLLYPPS.

The protein resides in the membrane. This is an uncharacterized protein from Acanthamoeba polyphaga mimivirus (APMV).